The sequence spans 155 residues: Aspartate carbamoyltransferase regulatory chain (155 aa).

Residues Cys-113, Cys-118, Cys-139, and Cys-142 each coordinate Zn(2+).

The protein belongs to the PyrI family. Contains catalytic and regulatory chains. The cofactor is Zn(2+).

Functionally, involved in allosteric regulation of aspartate carbamoyltransferase. In Methanosphaerula palustris (strain ATCC BAA-1556 / DSM 19958 / E1-9c), this protein is Aspartate carbamoyltransferase regulatory chain.